Consider the following 410-residue polypeptide: Serine hydroxymethyltransferase (410 aa).

(6S)-5,6,7,8-tetrahydrofolate-binding positions include leucine 119 and 123 to 125; that span reads GHL. Lysine 228 carries the post-translational modification N6-(pyridoxal phosphate)lysine. 351–353 lines the (6S)-5,6,7,8-tetrahydrofolate pocket; that stretch reads SPF.

This sequence belongs to the SHMT family. As to quaternary structure, homodimer. Pyridoxal 5'-phosphate is required as a cofactor.

The protein resides in the cytoplasm. It catalyses the reaction (6R)-5,10-methylene-5,6,7,8-tetrahydrofolate + glycine + H2O = (6S)-5,6,7,8-tetrahydrofolate + L-serine. The protein operates within one-carbon metabolism; tetrahydrofolate interconversion. Its pathway is amino-acid biosynthesis; glycine biosynthesis; glycine from L-serine: step 1/1. Its function is as follows. Catalyzes the reversible interconversion of serine and glycine with tetrahydrofolate (THF) serving as the one-carbon carrier. This reaction serves as the major source of one-carbon groups required for the biosynthesis of purines, thymidylate, methionine, and other important biomolecules. Also exhibits THF-independent aldolase activity toward beta-hydroxyamino acids, producing glycine and aldehydes, via a retro-aldol mechanism. The chain is Serine hydroxymethyltransferase from Alkaliphilus metalliredigens (strain QYMF).